The chain runs to 227 residues: MNQDQLKQLVGQKAVEYIQDGMQVGLGTGSTVKFMVDALGERVKNEHLNIVGVSTSDRTAAQAKALGIPMKSVDEVDHLDLTIDGADEIADDFQGVKGGGAALLFEKIVAINSDKVMWIVDESKMVHQLGAFGLPVEVIPYGSQHVFEKMAARGYNPVFRKVNDELVRTDSNNIIIDLHIDPITDPHALAEDLIHMVGVVEHGLFLDMVNTVIVGHANGPEVIEARP.

Residues 28–31 (TGST), 84–87 (DGAD), and 97–100 (KGGG) contribute to the substrate site. The active-site Proton acceptor is the E106. Residue K124 participates in substrate binding.

The protein belongs to the ribose 5-phosphate isomerase family. As to quaternary structure, homodimer.

The enzyme catalyses aldehydo-D-ribose 5-phosphate = D-ribulose 5-phosphate. It functions in the pathway carbohydrate degradation; pentose phosphate pathway; D-ribose 5-phosphate from D-ribulose 5-phosphate (non-oxidative stage): step 1/1. In terms of biological role, catalyzes the reversible conversion of ribose-5-phosphate to ribulose 5-phosphate. In Lactiplantibacillus plantarum (strain ATCC BAA-793 / NCIMB 8826 / WCFS1) (Lactobacillus plantarum), this protein is Ribose-5-phosphate isomerase A.